We begin with the raw amino-acid sequence, 251 residues long: Flap endonuclease Xni (251 aa).

Mg(2+) is bound at residue Asp104. The region spanning 160–250 (VQPQQLPDYW…DGNLQQLRLK (91 aa)) is the 5'-3' exonuclease domain. K(+) is bound by residues Leu171, Ala172, Pro180, Val182, and Ile185. An interaction with DNA region spans residues 184-189 (GIGPKS).

It belongs to the Xni family. The cofactor is Mg(2+). Requires K(+) as cofactor.

Has flap endonuclease activity. During DNA replication, flap endonucleases cleave the 5'-overhanging flap structure that is generated by displacement synthesis when DNA polymerase encounters the 5'-end of a downstream Okazaki fragment. The protein is Flap endonuclease Xni of Escherichia fergusonii (strain ATCC 35469 / DSM 13698 / CCUG 18766 / IAM 14443 / JCM 21226 / LMG 7866 / NBRC 102419 / NCTC 12128 / CDC 0568-73).